The following is a 202-amino-acid chain: IMP cyclohydrolase (202 aa).

The protein belongs to the archaeal IMP cyclohydrolase family.

The enzyme catalyses IMP + H2O = 5-formamido-1-(5-phospho-D-ribosyl)imidazole-4-carboxamide. Its pathway is purine metabolism; IMP biosynthesis via de novo pathway; IMP from 5-formamido-1-(5-phospho-D-ribosyl)imidazole-4-carboxamide: step 1/1. Catalyzes the cyclization of 5-formylamidoimidazole-4-carboxamide ribonucleotide to IMP. The sequence is that of IMP cyclohydrolase from Methanothermobacter thermautotrophicus (strain ATCC 29096 / DSM 1053 / JCM 10044 / NBRC 100330 / Delta H) (Methanobacterium thermoautotrophicum).